The chain runs to 252 residues: Large ribosomal subunit protein uL29m (252 aa).

The residue at position 146 (Lys-146) is an N6-acetyllysine. Residues 230–240 show a composition bias toward basic residues; sequence KKKEKILHAKF. A disordered region spans residues 230–252; that stretch reads KKKEKILHAKFPHLSQERKSSSV.

This sequence belongs to the universal ribosomal protein uL29 family. In terms of assembly, component of the mitochondrial ribosome large subunit (39S) which comprises a 16S rRNA and about 50 distinct proteins.

Its subcellular location is the mitochondrion. The protein is Large ribosomal subunit protein uL29m (Mrpl47) of Mus musculus (Mouse).